Reading from the N-terminus, the 208-residue chain is Small ribosomal subunit protein uS4 (208 aa).

The region spanning 98–158 is the S4 RNA-binding domain; it reads GRLDNVVYRM…EKSKKQARIK (61 aa).

The protein belongs to the universal ribosomal protein uS4 family. As to quaternary structure, part of the 30S ribosomal subunit. Contacts protein S5. The interaction surface between S4 and S5 is involved in control of translational fidelity.

Its function is as follows. One of the primary rRNA binding proteins, it binds directly to 16S rRNA where it nucleates assembly of the body of the 30S subunit. Functionally, with S5 and S12 plays an important role in translational accuracy. This Haemophilus ducreyi (strain 35000HP / ATCC 700724) protein is Small ribosomal subunit protein uS4.